Consider the following 359-residue polypeptide: Guanine nucleotide-binding protein subunit alpha-11 (359 aa).

S-palmitoyl cysteine attachment occurs at residues C9 and C10. In terms of domain architecture, G-alpha spans 38–359 (RELKLLLLGT…QLNLKEYNLV (322 aa)). The G1 motif stretch occupies residues 41-54 (KLLLLGTGESGKST). Residues 46–53 (GTGESGKS) and 180–183 (LRVR) each bind GTP. S53 lines the Mg(2+) pocket. A G2 motif region spans residues 178-186 (DVLRVRVPT). Mg(2+) is bound at residue T186. A G3 motif region spans residues 201–210 (FRMVDVGGQR). Residues 270 to 277 (ILFLNKKD) are G4 motif. GTP is bound by residues 274–277 (NKKD) and A331. Positions 329–334 (TCATDT) are G5 motif.

Belongs to the G-alpha family. G(q) subfamily. In terms of assembly, g proteins are composed of 3 units; alpha, beta and gamma. The alpha chain contains the guanine nucleotide binding site. Interacts with RGS22. Interacts with NTSR1.

The protein resides in the cell membrane. It is found in the cytoplasm. The enzyme catalyses GTP + H2O = GDP + phosphate + H(+). Functionally, guanine nucleotide-binding proteins (G proteins) function as transducers downstream of G protein-coupled receptors (GPCRs) in numerous signaling cascades. The alpha chain contains the guanine nucleotide binding site and alternates between an active, GTP-bound state and an inactive, GDP-bound state. Signaling by an activated GPCR promotes GDP release and GTP binding. The alpha subunit has a low GTPase activity that converts bound GTP to GDP, thereby terminating the signal. Both GDP release and GTP hydrolysis are modulated by numerous regulatory proteins. Signaling is mediated via phospholipase C-beta-dependent inositol lipid hydrolysis for signal propagation: activates phospholipase C-beta: following GPCR activation, GNA11 activates PLC-beta (PLCB1, PLCB2, PLCB3 or PLCB4), leading to production of diacylglycerol (DAG) and inositol 1,4,5-trisphosphate (IP3). Transduces FFAR4 signaling in response to long-chain fatty acids (LCFAs). Together with GNAQ, required for heart development. In the respiratory epithelium, transmits OXGR1-dependent signals that lead to downstream intracellular Ca(2+) release and mucocilliary clearance of airborne pathogens. In Sus scrofa (Pig), this protein is Guanine nucleotide-binding protein subunit alpha-11 (GNA11).